The sequence spans 708 residues: Glycine--tRNA ligase beta subunit (708 aa).

This sequence belongs to the class-II aminoacyl-tRNA synthetase family. Tetramer of two alpha and two beta subunits.

Its subcellular location is the cytoplasm. It carries out the reaction tRNA(Gly) + glycine + ATP = glycyl-tRNA(Gly) + AMP + diphosphate. This is Glycine--tRNA ligase beta subunit from Paracidovorax citrulli (strain AAC00-1) (Acidovorax citrulli).